The following is a 610-amino-acid chain: 6(G)-fructosyltransferase (610 aa).

Residues 1 to 20 (MATSLQAPILGSRPPRRTLR) are Cytoplasmic-facing. A helical; Signal-anchor for type II membrane protein transmembrane segment spans residues 21-38 (FLSFALFSALVLVVASFS). Residues 39-610 (SRKSESGSGL…NQYYPFTSSN (572 aa)) lie on the Vacuolar side of the membrane. Substrate contacts are provided by residues 79 to 82 (YMND), Gln98, Trp106, 141 to 142 (WT), and 207 to 208 (RD). Residue Asp82 is part of the active site. Residues Asn215, Asn229, and Asn248 are each glycosylated (N-linked (GlcNAc...) asparagine). Glu266 lines the substrate pocket. Asn459 is a glycosylation site (N-linked (GlcNAc...) asparagine). A disulfide bond links Cys460 and Cys508. Asn580 and Asn597 each carry an N-linked (GlcNAc...) asparagine glycan.

This sequence belongs to the glycosyl hydrolase 32 family. Might be processed in two N-terminal and C-terminal proteolytic fragments.

Its subcellular location is the vacuole membrane. The catalysed reaction is [1-beta-D-fructofuranosyl-(2-&gt;1)-]m+1 alpha-D-glucopyranoside + [1-beta-D-fructofuranosyl-(2-&gt;1)-]n+1 alpha-D-glucopyranoside = [1-beta-D-fructofuranosyl-(2-&gt;1)-]m alpha-D-glucopyranoside + [1-beta-D-fructofuranosyl-(2-&gt;1)-]n+1 beta-D-fructofuranosyl-(2-&gt;6)-alpha-D-glucopyranoside (m &gt; 0, n &gt;= 0).. In terms of biological role, involved in the synthesis of fructan of the inulin neoseries. Has no 1-FFT activity. This is 6(G)-fructosyltransferase (FT1) from Asparagus officinalis (Garden asparagus).